A 607-amino-acid chain; its full sequence is Karyogamy meiotic segregation protein 1 (607 aa).

A disordered region spans residues 83–135; sequence DDSFANQAEKPSMEQQNSKNSIKEDANEHSVNSAHSKSSSNASPESLNPSQMM. Over residues 111–132 the composition is skewed to low complexity; it reads HSVNSAHSKSSSNASPESLNPS.

Interacts with mcp1 and sad1.

It is found in the cytoplasm. Its subcellular location is the cytoskeleton. It localises to the microtubule organizing center. The protein resides in the spindle pole body. Functionally, has a role in karyogamy, recombination and segregation during meiosis. Although it has been shown to associate with the spindle pole body it is unlikely to be involved in its formation or maintenance. In Schizosaccharomyces pombe (strain 972 / ATCC 24843) (Fission yeast), this protein is Karyogamy meiotic segregation protein 1 (kms1).